The following is a 671-amino-acid chain: DNA ligase (671 aa).

NAD(+) is bound by residues D36–D40, S85–M86, and E115. Catalysis depends on K117, which acts as the N6-AMP-lysine intermediate. NAD(+)-binding residues include R138, E172, K287, and K311. Residues C405, C408, C423, and C428 each contribute to the Zn(2+) site. A BRCT domain is found at A588–K671.

It belongs to the NAD-dependent DNA ligase family. LigA subfamily. It depends on Mg(2+) as a cofactor. The cofactor is Mn(2+).

The catalysed reaction is NAD(+) + (deoxyribonucleotide)n-3'-hydroxyl + 5'-phospho-(deoxyribonucleotide)m = (deoxyribonucleotide)n+m + AMP + beta-nicotinamide D-nucleotide.. Its function is as follows. DNA ligase that catalyzes the formation of phosphodiester linkages between 5'-phosphoryl and 3'-hydroxyl groups in double-stranded DNA using NAD as a coenzyme and as the energy source for the reaction. It is essential for DNA replication and repair of damaged DNA. The sequence is that of DNA ligase from Lactobacillus delbrueckii subsp. bulgaricus (strain ATCC 11842 / DSM 20081 / BCRC 10696 / JCM 1002 / NBRC 13953 / NCIMB 11778 / NCTC 12712 / WDCM 00102 / Lb 14).